A 329-amino-acid polypeptide reads, in one-letter code: MKLTVLVGGVGGARFLLGAQRLLGLGQFATPDDNARHELTAVVNIGDDAWIHGLRICPDLDTCMYTLGGGVDPQRGWGHRDETWHAKEELARYGVQPDWFQLGDRDLATHLVRTQMLRAGYPLAQITTALCDRWQPGATLLPVSNDRCETHVVVTDPTDQQQRAIHFQEWWVRYRAELPTHSFVFIGTETASATTEVTAAIADADVVMLAPSNPVVSIGAILAVPGIRAALRATRAPIIGYSPIIAGKPVRGMADACLSVIGVDTTAEAVGRHYGARAATGVLDYWLVAEGDQAEIDSVTVRSIPLLMSDPEATAQMVRAGLELAGVTV.

Asp-61 provides a ligand contact to 7,8-didemethyl-8-hydroxy-5-deazariboflavin.

It belongs to the CofD family. In terms of assembly, homodimer. Mg(2+) serves as cofactor.

The enzyme catalyses enolpyruvoyl-2-diphospho-5'-guanosine + 7,8-didemethyl-8-hydroxy-5-deazariboflavin = dehydro coenzyme F420-0 + GMP + H(+). It functions in the pathway cofactor biosynthesis; coenzyme F420 biosynthesis. Catalyzes the transfer of the phosphoenolpyruvate moiety from enoylpyruvoyl-2-diphospho-5'-guanosine (EPPG) to 7,8-didemethyl-8-hydroxy-5-deazariboflavin (FO) with the formation of dehydro coenzyme F420-0 and GMP. In Mycobacterium marinum (strain ATCC BAA-535 / M), this protein is Phosphoenolpyruvate transferase.